Consider the following 865-residue polypeptide: Prominin-1 (865 aa).

An N-terminal signal peptide occupies residues 1–19 (MALVLGSLLLLGLCGNSFS). The Extracellular portion of the chain corresponds to 20 to 108 (GGQPSSTDAP…GLKIVYYEAG (89 aa)). A helical transmembrane segment spans residues 109 to 129 (IILCCVLGLLFIILMPLVGYF). At 130-157 (FCMCRCCNKCGGEMHQRQKENGPFLRKC) the chain is on the cytoplasmic side. A helical membrane pass occupies residues 158–178 (FAISLLVICIIISIGIFYGFV). The Extracellular segment spans residues 179 to 433 (ANHQVRTRIK…LPTLEEYDSY (255 aa)). The N-linked (GlcNAc...) asparagine glycan is linked to Asn220. An N6-acetyllysine mark is found at Lys225, Lys257, and Lys264. Residues Asn274, Asn395, and Asn414 are each glycosylated (N-linked (GlcNAc...) asparagine). A helical membrane pass occupies residues 434–454 (WWLGGLVICSLLTLIVIFYYL). Over 455-486 (GLLCGVCGYDRHATPTTRGCVSNTGGVFLMVG) the chain is Cytoplasmic. Residues 487–507 (VGLSFLFCWILMIIVVLTFVF) traverse the membrane as a helical segment. Over 508–792 (GANVEKLICE…LCSYIIDPLN (285 aa)) the chain is Extracellular. N-linked (GlcNAc...) asparagine glycosylation is found at Asn548, Asn580, Asn729, and Asn730. The chain crosses the membrane as a helical span at residues 793 to 813 (LFWFGIGKATVFLLPALIFAV). Residues 814–865 (KLAKYYRRMDSEDVYDDVETIPMKNMENGNNGYHKDHVYGIHNPVMTSPSQH) are Cytoplasmic-facing. At Ser863 the chain carries Phosphoserine.

The protein belongs to the prominin family. As to quaternary structure, interacts with CDHR1 and with actin filaments. Interacts with NAT8 and NAT8B. In terms of processing, isoform 1 and isoform 2 are glycosylated. Post-translationally, acetylation at Lys-225, Lys-257 and Lys-264 by NAT8 and NAT8B may control PROM1 protein expression and its function in cell apoptosis. Isoform 1 is selectively expressed on CD34 hematopoietic stem and progenitor cells in adult and fetal bone marrow, fetal liver, cord blood and adult peripheral blood. Isoform 1 is not detected on other blood cells. Isoform 1 is also expressed in a number of non-lymphoid tissues including retina, pancreas, placenta, kidney, liver, lung, brain and heart. Found in saliva within small membrane particles. Isoform 2 is predominantly expressed in fetal liver, skeletal muscle, kidney, and heart as well as adult pancreas, kidney, liver, lung, and placenta. Isoform 2 is highly expressed in fetal liver, low in bone marrow, and barely detectable in peripheral blood. Isoform 2 is expressed on hematopoietic stem cells and in epidermal basal cells (at protein level). Expressed in adult retina by rod and cone photoreceptor cells (at protein level).

Its subcellular location is the apical cell membrane. The protein localises to the cell projection. It localises to the microvillus membrane. It is found in the cilium. The protein resides in the photoreceptor outer segment. Its subcellular location is the endoplasmic reticulum. The protein localises to the endoplasmic reticulum-Golgi intermediate compartment. Functionally, may play a role in cell differentiation, proliferation and apoptosis. Binds cholesterol in cholesterol-containing plasma membrane microdomains and may play a role in the organization of the apical plasma membrane in epithelial cells. During early retinal development acts as a key regulator of disk morphogenesis. Involved in regulation of MAPK and Akt signaling pathways. In neuroblastoma cells suppresses cell differentiation such as neurite outgrowth in a RET-dependent manner. The polypeptide is Prominin-1 (PROM1) (Homo sapiens (Human)).